The following is a 370-amino-acid chain: Protein-tyrosine sulfotransferase 1 (370 aa).

At 1–8 (MVGKLKQN) the chain is on the cytoplasmic side. The helical; Signal-anchor for type II membrane protein transmembrane segment at 9–25 (LLLACLVISSVTVFYLG) threads the bilayer. At 26-370 (QHAMECHHRI…KEKPQTEQVE (345 aa)) the chain is on the lumenal side. An N-linked (GlcNAc...) asparagine glycan is attached at Asn60. 3'-phosphoadenylyl sulfate is bound at residue 79–83 (RSGTT). Residues Cys97 and Cys157 are joined by a disulfide bond. Glu100 functions as the Proton donor/acceptor in the catalytic mechanism. The interval 102 to 106 (RVIPR) is interaction with peptide substrate. Positions 184, 192, and 196 each coordinate 3'-phosphoadenylyl sulfate. The cysteines at positions 226 and 234 are disulfide-linked. Tyr239 serves as a coordination point for 3'-phosphoadenylyl sulfate. Residue Asn262 is glycosylated (N-linked (GlcNAc...) asparagine). Residues 286-295 (STDQVIKPVN) and Lys301 each bind 3'-phosphoadenylyl sulfate.

It belongs to the protein sulfotransferase family. Homodimer. Can also form heterodimers with TPST2. N-glycosylated. As to expression, ubiquitous. Detected in heart, brain, placenta, lung, liver, skeletal muscle, kidney and pancreas.

The protein localises to the golgi apparatus membrane. It catalyses the reaction L-tyrosyl-[protein] + 3'-phosphoadenylyl sulfate = O-sulfo-L-tyrosine-[protein] + adenosine 3',5'-bisphosphate + H(+). Catalyzes the O-sulfation of tyrosine residues within acidic motifs of polypeptides, using 3'-phosphoadenylyl sulfate (PAPS) as cosubstrate. The sequence is that of Protein-tyrosine sulfotransferase 1 (TPST1) from Homo sapiens (Human).